A 633-amino-acid chain; its full sequence is UvrABC system protein C (633 aa).

The GIY-YIG domain occupies 21 to 100 (TDPGVYKFLD…IKELQPRYNV (80 aa)). The 36-residue stretch at 214–249 (QELMDLLKDEMQRQSDAHNFEEAARLRDQVKALKDY) folds into the UVR domain.

It belongs to the UvrC family. Interacts with UvrB in an incision complex.

The protein resides in the cytoplasm. Its function is as follows. The UvrABC repair system catalyzes the recognition and processing of DNA lesions. UvrC both incises the 5' and 3' sides of the lesion. The N-terminal half is responsible for the 3' incision and the C-terminal half is responsible for the 5' incision. In Salinibacter ruber (strain DSM 13855 / M31), this protein is UvrABC system protein C.